A 612-amino-acid polypeptide reads, in one-letter code: Baeyer-Villiger monooxygenase 4 (612 aa).

FAD-binding positions include E99, 107 to 110 (TWYW), D119, Y125, and A169. 117 to 119 (QCD) contributes to the NADP(+) binding site. Residues 253–259 (TGATGVQ), 276–277 (RT), and 393–394 (KR) each bind NADP(+).

This sequence belongs to the FAD-binding monooxygenase family. It depends on FAD as a cofactor.

Catalyzes a Baeyer-Villiger oxidation reaction, i.e. the insertion of an oxygen atom into a carbon-carbon bond adjacent to a carbonyl, which converts ketones to esters or lactones using NADPH as an electron donor. Has a broad substrate scope and oxidizes different compounds including substituted and unsubstituted alicyclic, bicyclic-, aliphatic-ketones, ketones with an aromatic moiety, and sulfides. The highest activities are measured for 2- and 3-methylcyclohexanone, phenylacetone, bicyclo[3.2.0]hept-2-en-6-one and menthone. Cannot use NADH instead of NADPH. Is not active on benzaldehyde. The sequence is that of Baeyer-Villiger monooxygenase 4 from Dietzia sp. (strain D5).